Here is a 178-residue protein sequence, read N- to C-terminus: Caveolin-1 (178 aa).

Serine 2 is subject to N-acetylserine. Serine 2 carries the phosphoserine modification. Positions 2-94 (SGGKYVDSEG…WKASFTTFTV (93 aa)) are required for homooligomerization. Residues 2-104 (SGGKYVDSEG…TKYWFYRLLS (103 aa)) are Cytoplasmic-facing. The residue at position 5 (lysine 5) is an N6-acetyllysine; alternate. Lysine 5 is covalently cross-linked (Glycyl lysine isopeptide (Lys-Gly) (interchain with G-Cter in ubiquitin); alternate). Tyrosine 6 is subject to Phosphotyrosine. Residue serine 9 is modified to Phosphoserine. Tyrosine 14 bears the Phosphotyrosine; by ABL1 mark. Residue tyrosine 25 is modified to Phosphotyrosine. Residues lysine 26, lysine 30, lysine 39, lysine 47, and lysine 57 each participate in a glycyl lysine isopeptide (Lys-Gly) (interchain with G-Cter in ubiquitin) cross-link. An interaction with CAVIN3 region spans residues 82–94 (DGIWKASFTTFTV). An intramembrane region (helical) is located at residues 105 to 125 (ALFGIPMALIWGIYFAILSFL). The Cytoplasmic segment spans residues 126–178 (HIWAVVPCIKSFLIEIQCISRVYSIYVHTFCDPLFEAIGKIFSNIRINTQKEI). The interval 131–142 (VPCIKSFLIEIQ) is interacts with SPRY1, SPRY2, SPRY3 and SPRY4. Residues cysteine 133, cysteine 143, and cysteine 156 are each lipidated (S-palmitoyl cysteine). The tract at residues 149–160 (SIYVHTFCDPLF) is interacts with SPRY1, SPRY2, and SPRY4. An interacts with SPRY1, SPRY2, SPRY3 and SPRY4 region spans residues 167–178 (FSNIRINTQKEI).

This sequence belongs to the caveolin family. Homooligomer. Interacts with GLIPR2. Interacts with NOSTRIN. Interacts with SNAP25 and STX1A. Interacts (via the N-terminus) with DPP4; the interaction is direct. Interacts with CTNNB1, CDH1 and JUP. Interacts with PACSIN2; this interaction induces membrane tubulation. Interacts with SLC7A9. Interacts with BMX and BTK. Interacts with TGFBR1. Interacts with CAVIN3 (via leucine-zipper domain) in a cholesterol-sensitive manner. Interacts with CAVIN1. Interacts with EHD2 in a cholesterol-dependent manner. Forms a ternary complex with UBXN6 and VCP; mediates CAV1 targeting to lysosomes for degradation. Interacts with ABCG1; this interaction regulates ABCG1-mediated cholesterol efflux. Interacts with NEU3; this interaction enhances NEU3 sialidase activity within caveola. Interacts (via C-terminus) with SPRY1, SPRY2 (via C-terminus), SPRY3, and SPRY4. Interacts with IGFBP5; this interaction allows trafficking of IGFBP5 from the plasma membrane to the nucleus. Post-translationally, phosphorylated at Tyr-14 by ABL1 in response to oxidative stress. Ubiquitinated. Undergo monoubiquitination and multi- and/or polyubiquitination. Monoubiquitination of N-terminal lysines promotes integration in a ternary complex with UBXN6 and VCP which promotes oligomeric CAV1 targeting to lysosomes for degradation. Ubiquitinated by ZNRF1; leading to degradation and modulation of the TLR4-mediated immune response.

The protein localises to the golgi apparatus membrane. It localises to the cell membrane. It is found in the membrane. The protein resides in the caveola. Its subcellular location is the membrane raft. In terms of biological role, may act as a scaffolding protein within caveolar membranes. Forms a stable heterooligomeric complex with CAV2 that targets to lipid rafts and drives caveolae formation. Mediates the recruitment of CAVIN proteins (CAVIN1/2/3/4) to the caveolae. Interacts directly with G-protein alpha subunits and can functionally regulate their activity. Involved in the costimulatory signal essential for T-cell receptor (TCR)-mediated T-cell activation. Its binding to DPP4 induces T-cell proliferation and NF-kappa-B activation in a T-cell receptor/CD3-dependent manner. Recruits CTNNB1 to caveolar membranes and may regulate CTNNB1-mediated signaling through the Wnt pathway. Negatively regulates TGFB1-mediated activation of SMAD2/3 by mediating the internalization of TGFBR1 from membrane rafts leading to its subsequent degradation. Binds 20(S)-hydroxycholesterol (20(S)-OHC). The polypeptide is Caveolin-1 (CAV1) (Bos taurus (Bovine)).